Reading from the N-terminus, the 447-residue chain is Probable cytosol aminopeptidase (447 aa).

Residues Lys218 and Asp223 each coordinate Mn(2+). Lys230 is a catalytic residue. The Mn(2+) site is built by Asp241, Asp300, and Glu302. Arg304 is a catalytic residue.

It belongs to the peptidase M17 family. Mn(2+) is required as a cofactor.

Its subcellular location is the cytoplasm. It carries out the reaction Release of an N-terminal amino acid, Xaa-|-Yaa-, in which Xaa is preferably Leu, but may be other amino acids including Pro although not Arg or Lys, and Yaa may be Pro. Amino acid amides and methyl esters are also readily hydrolyzed, but rates on arylamides are exceedingly low.. It catalyses the reaction Release of an N-terminal amino acid, preferentially leucine, but not glutamic or aspartic acids.. Functionally, presumably involved in the processing and regular turnover of intracellular proteins. Catalyzes the removal of unsubstituted N-terminal amino acids from various peptides. This is Probable cytosol aminopeptidase (pepA) from Mycoplasma genitalium (strain ATCC 33530 / DSM 19775 / NCTC 10195 / G37) (Mycoplasmoides genitalium).